A 78-amino-acid polypeptide reads, in one-letter code: Acyl carrier protein (78 aa).

The Carrier domain maps to 1-76 (MSLEERVKEI…DVINYLKEKV (76 aa)). Ser36 carries the O-(pantetheine 4'-phosphoryl)serine modification.

Belongs to the acyl carrier protein (ACP) family. In terms of processing, 4'-phosphopantetheine is transferred from CoA to a specific serine of apo-ACP by AcpS. This modification is essential for activity because fatty acids are bound in thioester linkage to the sulfhydryl of the prosthetic group.

It localises to the cytoplasm. Its pathway is lipid metabolism; fatty acid biosynthesis. Its function is as follows. Carrier of the growing fatty acid chain in fatty acid biosynthesis. The chain is Acyl carrier protein from Aquifex aeolicus (strain VF5).